The sequence spans 391 residues: Small ribosomal subunit protein bS1 (391 aa).

S1 motif domains follow at residues 16–90 (GDKV…LSRR), 108–173 (NEII…LSRK), 194–262 (GDVI…LSIK), and 279–348 (NDDI…LSIK). The segment at 356–381 (VVESDPSTTKAYLESEEEDNPTIGDM) is disordered.

It belongs to the bacterial ribosomal protein bS1 family.

In terms of biological role, binds mRNA; thus facilitating recognition of the initiation point. It is needed to translate mRNA with a short Shine-Dalgarno (SD) purine-rich sequence. The chain is Small ribosomal subunit protein bS1 (rpsA) from Staphylococcus aureus (strain MRSA252).